A 347-amino-acid chain; its full sequence is Palmitoyltransferase ZDHHC19 (347 aa).

The next 2 helical transmembrane spans lie at 29-49 and 59-79; these read VFAAFNVTLLLFLSGLFFGFP and WAFPAITGPLFILTFFSLVSL. Residues 112–162 form the DHHC domain; sequence EWCPKCLFHRPPRTYHCPWCNICVEDFDHHCKWVNNCIGHRNFRLFMLLVL. C142 acts as the S-palmitoyl cysteine intermediate in catalysis. The next 2 membrane-spanning stretches (helical) occupy residues 156 to 176 and 194 to 214; these read LFMLLVLSLCLYSGALLVTCL and AILVAVPAAGFLIPLFLLLLI. The segment at 275 to 347 is disordered; sequence IQEKTKPSPP…PTAEPAAGDP (73 aa).

Belongs to the DHHC palmitoyltransferase family.

It is found in the golgi apparatus membrane. Its subcellular location is the cytoplasm. It localises to the perinuclear region. It catalyses the reaction L-cysteinyl-[protein] + hexadecanoyl-CoA = S-hexadecanoyl-L-cysteinyl-[protein] + CoA. In terms of biological role, palmitoyltransferase that mediates palmitoylation oproteins, such as RRAS and SQSTM1. Catalyzes palmitoylation of RRAS, leading to increased cell viability. Acts as a positive regulator of autophagy by mediating palmitoylation of SQSTM1, promoting affinity between SQSTM1 and ATG8 proteins and recruitment of ubiquitinated cargo proteins to autophagosomes. This chain is Palmitoyltransferase ZDHHC19 (Zdhhc19), found in Mus musculus (Mouse).